Here is a 344-residue protein sequence, read N- to C-terminus: L-rhamnose-proton symporter (344 aa).

10 helical membrane-spanning segments follow: residues 4–24, 38–58, 68–88, 101–121, 137–157, 175–195, 214–234, 259–279, 290–310, and 323–343; these read AITM…CFYA, WSVG…ALLL, FSLS…IGNI, MGIG…TPII, TLLG…AGQL, LVLA…MNAA, LPSY…FCFI, VLLS…YAWG, ISWM…GLVL, and VLSL…IGMA.

Belongs to the L-rhamnose transporter (TC 2.A.7.6) family.

The protein localises to the cell inner membrane. It carries out the reaction L-rhamnopyranose(in) + H(+)(in) = L-rhamnopyranose(out) + H(+)(out). Uptake of L-rhamnose across the cytoplasmic membrane with the concomitant transport of protons into the cell (symport system). In Escherichia coli O9:H4 (strain HS), this protein is L-rhamnose-proton symporter.